We begin with the raw amino-acid sequence, 194 residues long: Cupin-domain-containing oxidoreductase virC (194 aa).

Residues 106–175 form the Cupin type-2 domain; sequence IDFAPNVISP…GTLPGRMMWV (70 aa).

Belongs to the virC family.

Its pathway is secondary metabolite biosynthesis. In terms of biological role, cupin-domain-containing oxidoreductase; part of the gene cluster that mediates the biosynthesis of virensols and trichoxide, fungal natural products that contain or are derived from a salicylaldehyde core. The pathway begins with the synthesis of the reduced chain in virensol C by the highly reducing polyketide synthase virA via condensation of one acetate and 8 malonate units. VirA has interesting programming rules since the first 2 ketides are fully reduced, the 3 following ketides undergo beta-dehydration, and the last 3 ketides are only reduced to beta-hydroxys to yield the trihydroxy portion. The production of aldehyde virensol C by virA alone is surprising, since virA does not contain a reductase (R) domain that is typically associated with reductive product release in HRPKS. The cupin-domain enzyme virC is involved in enhancing virA product turnover. The short-chain dehydrogenase virB then oxidizes the C-7 alcohol of virensol C to a ketone, yielding virensol D. Virensol D is further transformed to salicylaldehyde 5-deoxyaurocitrin by the short-chain dehydrogenase virD. VirD catalyzes the dehydrogenation of C-3 to form the beta-ketone aldehyde, which is followed by the generation of the nucleophilic C-2 that is required for the intramolecular aldol condensation between C-2 and C-7, itself followed by dehydration and aromatization which leads to salicylaldehyde 5-deoxyaurocitrin. While the dehydrogenation of virensol D is definitely catalyzed by virD, the aldol condensation and dehydration may be uncatalyzed or assisted by virD. The short chain dehydrogenase virG then converts salicylaldehyde 5-deoxyaurocitrin into virensol B which is further hydroxylated by the cytochrome P450 monooxygenase virE to yield the hydroquinone virensol A. VirI then may oxidize virensol A to form the quinone, while virH performs the epoxidation. Finally, the two remaining short-chain dehydrogenases, virK and virL, are probably responsible for reducing the ketones to the corresponding alcohols to furnish the epoxycyclohexanol structure in trichoxide. This Hypocrea virens (strain Gv29-8 / FGSC 10586) (Gliocladium virens) protein is Cupin-domain-containing oxidoreductase virC.